Here is a 612-residue protein sequence, read N- to C-terminus: uncharacterized protein (612 aa).

The segment covering 176-196 (LVQRNNATTSPTTDSASENNE) has biased composition (polar residues). The segment at 176-203 (LVQRNNATTSPTTDSASENNESVPSLTS) is disordered.

It to yeast YNL034w.

This is an uncharacterized protein from Saccharomyces cerevisiae (strain ATCC 204508 / S288c) (Baker's yeast).